The following is a 525-amino-acid chain: GMP synthase [glutamine-hydrolyzing] (525 aa).

The 192-residue stretch at 12 to 203 (TVLVVDFGAQ…LYRGAGLTPS (192 aa)) folds into the Glutamine amidotransferase type-1 domain. Cys89 acts as the Nucleophile in catalysis. Active-site residues include His177 and Glu179. Residues 204–399 (WTTGNVIDEQ…LGLPDEIVQR (196 aa)) form the GMPS ATP-PPase domain. An ATP-binding site is contributed by 231–237 (SGGVDSA).

As to quaternary structure, homodimer.

The catalysed reaction is XMP + L-glutamine + ATP + H2O = GMP + L-glutamate + AMP + diphosphate + 2 H(+). Its pathway is purine metabolism; GMP biosynthesis; GMP from XMP (L-Gln route): step 1/1. Its function is as follows. Catalyzes the synthesis of GMP from XMP. The chain is GMP synthase [glutamine-hydrolyzing] from Streptomyces avermitilis (strain ATCC 31267 / DSM 46492 / JCM 5070 / NBRC 14893 / NCIMB 12804 / NRRL 8165 / MA-4680).